We begin with the raw amino-acid sequence, 489 residues long: Protein MGF 505-2R (489 aa).

The protein belongs to the asfivirus MGF 505 family.

Its function is as follows. Plays a role in virus cell tropism, and may be required for efficient virus replication in macrophages. This Ornithodoros (relapsing fever ticks) protein is Protein MGF 505-2R.